Reading from the N-terminus, the 656-residue chain is Putative L-type lectin-domain containing receptor kinase V.2 (656 aa).

An N-terminal signal peptide occupies residues 1-23 (MSLLLKMLLFSLFFFYMASISQC). Residues 24 to 276 (SDPTGGQFSF…EDQERSLSSK (253 aa)) are Extracellular-facing. The tract at residues 29 to 248 (GQFSFNGYLY…SHYILGWSFN (220 aa)) is legume-lectin like. N-linked (GlcNAc...) asparagine glycosylation is found at N78, N124, N159, N190, and N257. The chain crosses the membrane as a helical span at residues 277–297 (ILAISLSISGVTLVIVLILGV). Residues 298–656 (MLFLKRKKFL…MTESFLSSGR (359 aa)) are Cytoplasmic-facing. The region spanning 334-615 (FKNSEVLGKG…GVATLPHNLL (282 aa)) is the Protein kinase domain. ATP is bound by residues 340–348 (LGKGGFGKV) and K363. Catalysis depends on D459, which acts as the Proton acceptor.

This sequence in the C-terminal section; belongs to the protein kinase superfamily. Ser/Thr protein kinase family. It in the N-terminal section; belongs to the leguminous lectin family.

The protein localises to the cell membrane. It carries out the reaction L-seryl-[protein] + ATP = O-phospho-L-seryl-[protein] + ADP + H(+). The enzyme catalyses L-threonyl-[protein] + ATP = O-phospho-L-threonyl-[protein] + ADP + H(+). This is Putative L-type lectin-domain containing receptor kinase V.2 (LECRK52) from Arabidopsis thaliana (Mouse-ear cress).